Reading from the N-terminus, the 1102-residue chain is Carbamoyl phosphate synthase large chain (1102 aa).

Positions 1–408 are carboxyphosphate synthetic domain; the sequence is MPKRTDIQSV…ALQKALRSLE (408 aa). ATP contacts are provided by arginine 129, arginine 175, glycine 181, glycine 182, glutamate 214, isoleucine 216, glutamate 221, glycine 247, valine 248, histidine 249, glutamine 291, and glutamate 305. Residues 138–334 form the ATP-grasp 1 domain; it reads AVRAKIGHGE…IAKIAAKLAV (197 aa). Mg(2+) is bound by residues glutamine 291, glutamate 305, and asparagine 307. Mn(2+) contacts are provided by glutamine 291, glutamate 305, and asparagine 307. The interval 409 to 551 is oligomerization domain; that stretch reads KKGSQFTFVG…YFYSSYDEES (143 aa). Residues 552 to 954 form a carbamoyl phosphate synthetic domain region; the sequence is EVAPREKPAV…AYAKSQAGAY (403 aa). Residues 682–873 form the ATP-grasp 2 domain; the sequence is GQVLAEAGLP…LAKAAARISL (192 aa). Positions 718, 757, 759, 764, 789, 790, 791, 792, 832, and 844 each coordinate ATP. The Mg(2+) site is built by glutamine 832, glutamate 844, and asparagine 846. Positions 832, 844, and 846 each coordinate Mn(2+). One can recognise an MGS-like domain in the interval 955–1100; it reads GPLPTKGRAF…QEHAEHLTAA (146 aa). The allosteric domain stretch occupies residues 955 to 1102; the sequence is GPLPTKGRAF…HAEHLTAARD (148 aa).

Belongs to the CarB family. As to quaternary structure, composed of two chains; the small (or glutamine) chain promotes the hydrolysis of glutamine to ammonia, which is used by the large (or ammonia) chain to synthesize carbamoyl phosphate. Tetramer of heterodimers (alpha,beta)4. Requires Mg(2+) as cofactor. The cofactor is Mn(2+).

The enzyme catalyses hydrogencarbonate + L-glutamine + 2 ATP + H2O = carbamoyl phosphate + L-glutamate + 2 ADP + phosphate + 2 H(+). It carries out the reaction hydrogencarbonate + NH4(+) + 2 ATP = carbamoyl phosphate + 2 ADP + phosphate + 2 H(+). Its pathway is amino-acid biosynthesis; L-arginine biosynthesis; carbamoyl phosphate from bicarbonate: step 1/1. It participates in pyrimidine metabolism; UMP biosynthesis via de novo pathway; (S)-dihydroorotate from bicarbonate: step 1/3. Its function is as follows. Large subunit of the glutamine-dependent carbamoyl phosphate synthetase (CPSase). CPSase catalyzes the formation of carbamoyl phosphate from the ammonia moiety of glutamine, carbonate, and phosphate donated by ATP, constituting the first step of 2 biosynthetic pathways, one leading to arginine and/or urea and the other to pyrimidine nucleotides. The large subunit (synthetase) binds the substrates ammonia (free or transferred from glutamine from the small subunit), hydrogencarbonate and ATP and carries out an ATP-coupled ligase reaction, activating hydrogencarbonate by forming carboxy phosphate which reacts with ammonia to form carbamoyl phosphate. The sequence is that of Carbamoyl phosphate synthase large chain from Streptomyces avermitilis (strain ATCC 31267 / DSM 46492 / JCM 5070 / NBRC 14893 / NCIMB 12804 / NRRL 8165 / MA-4680).